The following is a 159-amino-acid chain: Bacterioferritin (159 aa).

The Ferritin-like diiron domain maps to 1 to 145; it reads MQGDPEVLRL…TQLELMDKLG (145 aa). E18 and E51 together coordinate Fe cation. M52 is a heme b binding site. Fe cation contacts are provided by H54, E94, E127, and H130.

This sequence belongs to the bacterioferritin family. As to quaternary structure, homooligomer of 24 subunits, arranged as 12 dimers, that are packed together to form an approximately spherical molecule with a central cavity, in which large amounts of iron can be deposited. Requires heme b as cofactor.

The enzyme catalyses 4 Fe(2+) + O2 + 4 H(+) = 4 Fe(3+) + 2 H2O. It carries out the reaction Fe(2+)(in) = Fe(2+)(out). Functionally, iron-storage protein, whose ferroxidase center binds Fe(2+), oxidizes it using dioxygen to Fe(3+), and participates in the subsequent Fe(3+) oxide mineral core formation within the central cavity of the BFR protein shell. The polypeptide is Bacterioferritin (bfr) (Mycolicibacterium paratuberculosis (strain ATCC BAA-968 / K-10) (Mycobacterium paratuberculosis)).